The following is a 466-amino-acid chain: Glutamyl-tRNA reductase (466 aa).

Substrate contacts are provided by residues Thr47–Arg50, Ser107, Glu112–Gln114, and Gln118. Catalysis depends on Cys48, which acts as the Nucleophile. Gly194–Ser199 lines the NADP(+) pocket.

This sequence belongs to the glutamyl-tRNA reductase family. Homodimer.

It carries out the reaction (S)-4-amino-5-oxopentanoate + tRNA(Glu) + NADP(+) = L-glutamyl-tRNA(Glu) + NADPH + H(+). The protein operates within porphyrin-containing compound metabolism; protoporphyrin-IX biosynthesis; 5-aminolevulinate from L-glutamyl-tRNA(Glu): step 1/2. In terms of biological role, catalyzes the NADPH-dependent reduction of glutamyl-tRNA(Glu) to glutamate 1-semialdehyde (GSA). This Corynebacterium efficiens (strain DSM 44549 / YS-314 / AJ 12310 / JCM 11189 / NBRC 100395) protein is Glutamyl-tRNA reductase.